Here is a 341-residue protein sequence, read N- to C-terminus: Mitochondrial transcription factor 1 (341 aa).

L23, E77, D101, and N137 together coordinate S-adenosyl-L-methionine.

The protein belongs to the class I-like SAM-binding methyltransferase superfamily. rRNA adenine N(6)-methyltransferase family.

It is found in the mitochondrion intermembrane space. Mitochondrial transcription factor that confers selective promoter recognition on the core subunit of the yeast mitochondrial RNA polymerase. Interacts with DNA in a non-specific manner. This is Mitochondrial transcription factor 1 (MTF1) from Saccharomyces cerevisiae (strain ATCC 204508 / S288c) (Baker's yeast).